The sequence spans 437 residues: Phosphoglucosamine mutase (437 aa).

Ser-101 acts as the Phosphoserine intermediate in catalysis. Mg(2+) is bound by residues Ser-101, Asp-234, Asp-236, and Asp-238. A Phosphoserine modification is found at Ser-101.

This sequence belongs to the phosphohexose mutase family. The cofactor is Mg(2+). Activated by phosphorylation.

It catalyses the reaction alpha-D-glucosamine 1-phosphate = D-glucosamine 6-phosphate. Catalyzes the conversion of glucosamine-6-phosphate to glucosamine-1-phosphate. The chain is Phosphoglucosamine mutase from Thermus thermophilus (strain ATCC 27634 / DSM 579 / HB8).